The sequence spans 489 residues: MEHFQQVEPFDYVIFGATGDLTMRKLLPALYNRLRMGQIPDDACIIGAARTELDREAYVARARDALERFLPSDILGPGLVERFLARLDYVTLDSSREGPQWDALKSLLAKAQPDRVRVYYFATAPQLYGSICENLNRYELITPTSRVVLEKPIGTNMATATAINDGVGQYFPEKQIYRIDHYLGKETVQNVLALRFANPLMNAAWSGEHIESVQITAVETVGVEGRAAYYDTSGALRDMIQNHLLQVLCLVAMEAPDSLEADAVRNAKLAVLNALRPITDATAATETVRAQYTAGVVDGENVPGYLEELGKPSATETYAAIRAWVDTPRWKNVPFYIRTAKRSGKKVSEIVVTFRPAATTMFGATPASNRLVLRIQPNEGVDLRLNVKNPALDVFNLRTADLDTSIRMEGGLPFPDSYERLLLDAVRGDPVLFIRRDEVEAAWRWVEPILEAWKHDKAPMQTYSAGSYGPEQATQLLASHGDTWHEASE.

The NADP(+) site is built by R50 and K151. Positions 181, 185, 219, and 238 each coordinate substrate. Residue H243 is the Proton acceptor of the active site. 2 residues coordinate substrate: K341 and K346.

The protein belongs to the glucose-6-phosphate dehydrogenase family. In terms of assembly, homodimer.

The enzyme catalyses D-glucose 6-phosphate + NADP(+) = 6-phospho-D-glucono-1,5-lactone + NADPH + H(+). The protein operates within carbohydrate degradation; pentose phosphate pathway; D-ribulose 5-phosphate from D-glucose 6-phosphate (oxidative stage): step 1/3. Functionally, catalyzes the oxidation of glucose 6-phosphate to 6-phosphogluconolactone. The protein is Glucose-6-phosphate 1-dehydrogenase of Gluconobacter oxydans (strain 621H) (Gluconobacter suboxydans).